Here is a 448-residue protein sequence, read N- to C-terminus: Phosphoglucosamine mutase (448 aa).

S100 serves as the catalytic Phosphoserine intermediate. Mg(2+)-binding residues include S100, D240, D242, and D244. S100 is subject to Phosphoserine.

The protein belongs to the phosphohexose mutase family. It depends on Mg(2+) as a cofactor. In terms of processing, activated by phosphorylation.

It catalyses the reaction alpha-D-glucosamine 1-phosphate = D-glucosamine 6-phosphate. Catalyzes the conversion of glucosamine-6-phosphate to glucosamine-1-phosphate. The protein is Phosphoglucosamine mutase of Bacillus pumilus (strain SAFR-032).